The chain runs to 185 residues: MYSTTDFRKGLKIEVEGIPYEIVDFQHFKPGKGGAMVRTKLRNILTGRMQDITFRSGEKVNKPDLETRDMQFLYRQDDDLIFMDMTTYEQLQMPVSTTDGKEGFLKDGQECRVLLYKGNPLDIDIPVSMVLAVVETEPGAKGDTVSNVTKPAKLETGLVVQVPIFVNEGDRIKVDTRSKEYLGRE.

It belongs to the elongation factor P family.

The protein resides in the cytoplasm. Its pathway is protein biosynthesis; polypeptide chain elongation. In terms of biological role, involved in peptide bond synthesis. Stimulates efficient translation and peptide-bond synthesis on native or reconstituted 70S ribosomes in vitro. Probably functions indirectly by altering the affinity of the ribosome for aminoacyl-tRNA, thus increasing their reactivity as acceptors for peptidyl transferase. The protein is Elongation factor P of Desulfovibrio desulfuricans (strain ATCC 27774 / DSM 6949 / MB).